We begin with the raw amino-acid sequence, 259 residues long: Small ribosomal subunit protein uS2 (259 aa).

It belongs to the universal ribosomal protein uS2 family.

The sequence is that of Small ribosomal subunit protein uS2 from Streptococcus pneumoniae serotype 2 (strain D39 / NCTC 7466).